Reading from the N-terminus, the 142-residue chain is Universal stress protein G (142 aa).

It belongs to the universal stress protein A family.

The sequence is that of Universal stress protein G (uspG) from Shigella flexneri.